Reading from the N-terminus, the 194-residue chain is Ribosome maturation factor RimM (194 aa).

A PRC barrel domain is found at 113 to 194; the sequence is DGEYYWIDLI…RIVADWGLDY (82 aa).

It belongs to the RimM family. As to quaternary structure, binds ribosomal protein uS19.

It localises to the cytoplasm. An accessory protein needed during the final step in the assembly of 30S ribosomal subunit, possibly for assembly of the head region. Essential for efficient processing of 16S rRNA. May be needed both before and after RbfA during the maturation of 16S rRNA. It has affinity for free ribosomal 30S subunits but not for 70S ribosomes. The sequence is that of Ribosome maturation factor RimM from Leptothrix cholodnii (strain ATCC 51168 / LMG 8142 / SP-6) (Leptothrix discophora (strain SP-6)).